The following is a 77-amino-acid chain: Acyl carrier protein (77 aa).

The 76-residue stretch at 2–77 (SDVAERVKKI…DAIDFITANS (76 aa)) folds into the Carrier domain. An O-(pantetheine 4'-phosphoryl)serine modification is found at Ser37.

Belongs to the acyl carrier protein (ACP) family. Post-translationally, 4'-phosphopantetheine is transferred from CoA to a specific serine of apo-ACP by AcpS. This modification is essential for activity because fatty acids are bound in thioester linkage to the sulfhydryl of the prosthetic group.

Its subcellular location is the cytoplasm. Its pathway is lipid metabolism; fatty acid biosynthesis. Its function is as follows. Carrier of the growing fatty acid chain in fatty acid biosynthesis. The protein is Acyl carrier protein of Paramagnetospirillum magneticum (strain ATCC 700264 / AMB-1) (Magnetospirillum magneticum).